The sequence spans 309 residues: Peptide methionine sulfoxide reductase MsrA/MsrB (309 aa).

The interval 1-153 (MIYLAEGCFW…PNGYCHIDIN (153 aa)) is peptide methionine sulfoxide reductase A. The active site involves cysteine 8. The MsrB domain maps to 170-293 (ATEIKAKLSA…NSLSITFIPK (124 aa)). Cysteine 282 (nucleophile) is an active-site residue.

It in the N-terminal section; belongs to the MsrA Met sulfoxide reductase family. This sequence in the C-terminal section; belongs to the MsrB Met sulfoxide reductase family.

The enzyme catalyses L-methionyl-[protein] + [thioredoxin]-disulfide + H2O = L-methionyl-(S)-S-oxide-[protein] + [thioredoxin]-dithiol. The catalysed reaction is [thioredoxin]-disulfide + L-methionine + H2O = L-methionine (S)-S-oxide + [thioredoxin]-dithiol. It catalyses the reaction L-methionyl-[protein] + [thioredoxin]-disulfide + H2O = L-methionyl-(R)-S-oxide-[protein] + [thioredoxin]-dithiol. Functionally, has an important function as a repair enzyme for proteins that have been inactivated by oxidation. Catalyzes the reversible oxidation-reduction of methionine sulfoxide in proteins to methionine. This chain is Peptide methionine sulfoxide reductase MsrA/MsrB (msrAB), found in Streptococcus pyogenes serotype M3 (strain ATCC BAA-595 / MGAS315).